The sequence spans 339 residues: Phenylalanine--tRNA ligase alpha subunit (339 aa).

Glutamate 254 lines the Mg(2+) pocket.

The protein belongs to the class-II aminoacyl-tRNA synthetase family. Phe-tRNA synthetase alpha subunit type 1 subfamily. Tetramer of two alpha and two beta subunits. Requires Mg(2+) as cofactor.

The protein resides in the cytoplasm. It carries out the reaction tRNA(Phe) + L-phenylalanine + ATP = L-phenylalanyl-tRNA(Phe) + AMP + diphosphate + H(+). In Clostridium botulinum (strain ATCC 19397 / Type A), this protein is Phenylalanine--tRNA ligase alpha subunit.